The sequence spans 1043 residues: Calcium-transporting ATPase 1, plasma membrane-type (1043 aa).

Residues 1 to 178 lie on the Cytoplasmic side of the membrane; the sequence is MSFIRKKSME…FLWDASQDMT (178 aa). A run of 2 helical transmembrane segments spans residues 179–199 and 202–222; these read LLLLAFCAAVSVAIGLATEGW and GMYDGVGIMLTILLVVMITAA. Over 223 to 258 the chain is Cytoplasmic; it reads SDYKQSLQFRDLDKEKKKIDVQVTRDGYRQKVSIYD. A run of 2 helical transmembrane segments spans residues 259–279 and 356–376; these read IVVGDIVHLSIGDQVPADGLF and VATIIGKIGLAFAVLTFTVLM. Over 377–395 the chain is Cytoplasmic; the sequence is ARFLLGKAGAPGGLLRWRM. A helical membrane pass occupies residues 396–416; that stretch reads VDALAVLNFFAVAVTIIVVAV. The 4-aspartylphosphate intermediate role is filled by Asp460. Residues Asp761 and Asp765 each coordinate Mg(2+). A helical membrane pass occupies residues 824–844; sequence LTVNVVALMVNFISASFTGSA. Residue Pro845 is a topological domain, cytoplasmic. Transmembrane regions (helical) follow at residues 846 to 866 and 891 to 911; these read LTIVQLLWVNLIMDTLGALAL and VMWRNIVGQSIYQLVVLGVLL. At 912–955 the chain is on the cytoplasmic side; sequence LRGKSLLQINGPQADSLLNTFVFNTFVFCQVFNEVNSREMEKIN. 2 helical membrane passes run 956–976 and 998–1018; these read VFSGIFSSWIFSAVVGVTAGF and WLTSVLIGSVGLVIGAILKCI. Topologically, residues 1019 to 1043 are cytoplasmic; sequence PVESGSDASDRHDGYRPIPTGPSAV. The disordered stretch occupies residues 1023 to 1043; sequence GSDASDRHDGYRPIPTGPSAV.

The protein belongs to the cation transport ATPase (P-type) (TC 3.A.3) family. Type IIB subfamily.

Its subcellular location is the membrane. It carries out the reaction Ca(2+)(in) + ATP + H2O = Ca(2+)(out) + ADP + phosphate + H(+). With respect to regulation, activated by calmodulin. Functionally, this magnesium-dependent enzyme catalyzes the hydrolysis of ATP coupled with the translocation of calcium from the cytosol out of the cell, into the endoplasmic reticulum, or into organelles. This chain is Calcium-transporting ATPase 1, plasma membrane-type, found in Oryza sativa subsp. japonica (Rice).